We begin with the raw amino-acid sequence, 284 residues long: Bifunctional protein FolD (284 aa).

NADP(+)-binding positions include 164–166 (GRS) and Ser189.

The protein belongs to the tetrahydrofolate dehydrogenase/cyclohydrolase family. Homodimer.

It catalyses the reaction (6R)-5,10-methylene-5,6,7,8-tetrahydrofolate + NADP(+) = (6R)-5,10-methenyltetrahydrofolate + NADPH. The enzyme catalyses (6R)-5,10-methenyltetrahydrofolate + H2O = (6R)-10-formyltetrahydrofolate + H(+). Its pathway is one-carbon metabolism; tetrahydrofolate interconversion. In terms of biological role, catalyzes the oxidation of 5,10-methylenetetrahydrofolate to 5,10-methenyltetrahydrofolate and then the hydrolysis of 5,10-methenyltetrahydrofolate to 10-formyltetrahydrofolate. The sequence is that of Bifunctional protein FolD from Listeria innocua serovar 6a (strain ATCC BAA-680 / CLIP 11262).